The following is a 116-amino-acid chain: Nucleoid-associated protein P9515_00191 (116 aa).

The segment covering 89–98 (STTTMKERMN) has biased composition (basic and acidic residues). The disordered stretch occupies residues 89–116 (STTTMKERMNDLTGGLNLNLPGLDNNDS). Residues 99–116 (DLTGGLNLNLPGLDNNDS) are compositionally biased toward low complexity.

This sequence belongs to the YbaB/EbfC family. In terms of assembly, homodimer.

The protein localises to the cytoplasm. The protein resides in the nucleoid. Binds to DNA and alters its conformation. May be involved in regulation of gene expression, nucleoid organization and DNA protection. The chain is Nucleoid-associated protein P9515_00191 from Prochlorococcus marinus (strain MIT 9515).